The chain runs to 194 residues: Putative manganese efflux pump MntP (194 aa).

Transmembrane regions (helical) follow at residues 3-23, 37-57, 65-85, 112-132, 137-157, and 170-190; these read PITT…AAIG, LYVA…GWLL, IATF…IHMI, LAAT…SMAF, IGIV…FGVM, and AEIV…YEHL.

It belongs to the MntP (TC 9.B.29) family.

It localises to the cell inner membrane. Functionally, probably functions as a manganese efflux pump. In Xylella fastidiosa (strain M23), this protein is Putative manganese efflux pump MntP.